Reading from the N-terminus, the 257-residue chain is MTTSLYWQTEGEGSDLVLIHGWGMNGAVWQTTSEKLSQHYRVHTVDLSGYGHSAELGSADFDEMVKQVLAQAPKKAAWLGWSLGGLIATKAALTSPERVSQLITVASSPCFSAEKGWRGIKPLILSQFTEQLKTDFTLTVERFMALQAMGSPNAKQDIKLIKKAVFSRPMPDQQALATGLMILADIDLREAVSQLSMPVCRMYGRLDGLVPIKVAHYMDELMPNSAKIVFEQASHAPFISHNDEFISELRTFLNQHA.

In terms of domain architecture, AB hydrolase-1 spans 16-240; the sequence is LVLIHGWGMN…EQASHAPFIS (225 aa). Residues Trp-22, 82 to 83, and 143 to 147 contribute to the substrate site; these read SL and FMALQ. Catalysis depends on Ser-82, which acts as the Nucleophile. Catalysis depends on residues Asp-207 and His-235. Residue His-235 participates in substrate binding.

Belongs to the AB hydrolase superfamily. Carboxylesterase BioH family. Monomer.

Its subcellular location is the cytoplasm. The enzyme catalyses 6-carboxyhexanoyl-[ACP] methyl ester + H2O = 6-carboxyhexanoyl-[ACP] + methanol + H(+). It functions in the pathway cofactor biosynthesis; biotin biosynthesis. In terms of biological role, the physiological role of BioH is to remove the methyl group introduced by BioC when the pimeloyl moiety is complete. It allows to synthesize pimeloyl-ACP via the fatty acid synthetic pathway through the hydrolysis of the ester bonds of pimeloyl-ACP esters. The polypeptide is Pimeloyl-[acyl-carrier protein] methyl ester esterase (Aliivibrio fischeri (strain MJ11) (Vibrio fischeri)).